The sequence spans 77 residues: Small ribosomal subunit protein bS18 (77 aa).

This sequence belongs to the bacterial ribosomal protein bS18 family. Part of the 30S ribosomal subunit. Forms a tight heterodimer with protein bS6.

Binds as a heterodimer with protein bS6 to the central domain of the 16S rRNA, where it helps stabilize the platform of the 30S subunit. The sequence is that of Small ribosomal subunit protein bS18 from Lactobacillus gasseri (strain ATCC 33323 / DSM 20243 / BCRC 14619 / CIP 102991 / JCM 1131 / KCTC 3163 / NCIMB 11718 / NCTC 13722 / AM63).